A 119-amino-acid chain; its full sequence is Probable non-functional T cell receptor gamma variable 10 (119 aa).

Residues 1 to 19 (MSLLEAFAFSSWALGLGLS) form the signal peptide. The 96-residue stretch at 24–119 (FQLSISTEVK…MAVYYCAAWD (96 aa)) folds into the Ig-like domain. A disulfide bridge connects residues cysteine 40 and cysteine 115.

As to quaternary structure, gamma-delta TR is a heterodimer composed of a gamma and delta chain; disulfide-linked. The gamma-delta TR is associated with the transmembrane signaling CD3 coreceptor proteins following the stoichiometry: a single gamma-delta TR heterodimer associates with one CD3D-CD3E heterodimer, one CD3G-CD3E heterodimer and one CD247 homodimer forming a stable octameric structure. Upon activation, gamma-delta TR complex associates with FCER1G to initiate intracellular signaling.

It is found in the cell membrane. In terms of biological role, probable non-functional open reading frame (ORF) of V region of the variable domain of T cell receptor (TR) gamma chain. Non-functional ORF generally cannot participate in the synthesis of a productive T cell receptor (TR) chain due to altered V-(D)-J or switch recombination and/or splicing site (at mRNA level) and/or conserved amino acid change (protein level). Gamma-delta TRs recognize a variety of self and foreign non-peptide antigens frequently expressed at the epithelial boundaries between the host and external environment, including endogenous lipids presented by MH-like protein CD1D and phosphoantigens presented by butyrophilin-like molecule BTN3A1. Upon antigen recognition induces rapid, innate-like immune responses involved in pathogen clearance and tissue repair. Binding of gamma-delta TR complex to antigen triggers phosphorylation of immunoreceptor tyrosine-based activation motifs (ITAMs) in the CD3 chains by the LCK and FYN kinases, allowing the recruitment, phosphorylation, and activation of ZAP70 that facilitates phosphorylation of the scaffolding proteins LCP2 and LAT. This lead to the formation of a supramolecular signalosome that recruits the phospholipase PLCG1, resulting in calcium mobilization and ERK activation, ultimately leading to T cell expansion and differentiation into effector cells. Gamma-delta TRs are produced through somatic rearrangement of a limited repertoire of variable (V), diversity (D), and joining (J) genes. The potential diversity of gamma-delta TRs is conferred by the unique ability to rearrange (D) genes in tandem and to utilize all three reading frames. The combinatorial diversity is considerably increased by the sequence exonuclease trimming and random nucleotide (N) region additions which occur during the V-(D)-J rearrangements. In Homo sapiens (Human), this protein is Probable non-functional T cell receptor gamma variable 10.